We begin with the raw amino-acid sequence, 547 residues long: Chaperonin GroEL (547 aa).

Residues 30–33 (TLGP), Lys51, 87–91 (DGTTT), Gly415, and Asp496 each bind ATP.

This sequence belongs to the chaperonin (HSP60) family. In terms of assembly, forms a cylinder of 14 subunits composed of two heptameric rings stacked back-to-back. Interacts with the co-chaperonin GroES.

The protein localises to the cytoplasm. It catalyses the reaction ATP + H2O + a folded polypeptide = ADP + phosphate + an unfolded polypeptide.. Functionally, together with its co-chaperonin GroES, plays an essential role in assisting protein folding. The GroEL-GroES system forms a nano-cage that allows encapsulation of the non-native substrate proteins and provides a physical environment optimized to promote and accelerate protein folding. The chain is Chaperonin GroEL from Actinobacillus succinogenes (strain ATCC 55618 / DSM 22257 / CCUG 43843 / 130Z).